The following is a 1202-amino-acid chain: Caffeine-induced protein 16 (1202 aa).

One can recognise a PAP-associated domain in the interval 1105 to 1159 (NIALLLRGFFCYYGLTTQYSFDWEAYMIDISSSQLKRKSTEFKDCPFVVLDPFLK).

This Schizosaccharomyces pombe (strain 972 / ATCC 24843) (Fission yeast) protein is Caffeine-induced protein 16 (cid16).